Here is a 336-residue protein sequence, read N- to C-terminus: tRNA-cytidine(32) 2-sulfurtransferase (336 aa).

The disordered stretch occupies residues 1 to 34; that stretch reads MNAPEILNGAATASPADATEATQTAARAKTPLTR. Positions 10–22 are enriched in low complexity; the sequence is AATASPADATEAT. A PP-loop motif motif is present at residues 75–80; the sequence is SGGKDS. Residues cysteine 150, cysteine 153, and cysteine 241 each contribute to the [4Fe-4S] cluster site.

This sequence belongs to the TtcA family. In terms of assembly, homodimer. Mg(2+) serves as cofactor. [4Fe-4S] cluster is required as a cofactor.

The protein localises to the cytoplasm. It catalyses the reaction cytidine(32) in tRNA + S-sulfanyl-L-cysteinyl-[cysteine desulfurase] + AH2 + ATP = 2-thiocytidine(32) in tRNA + L-cysteinyl-[cysteine desulfurase] + A + AMP + diphosphate + H(+). It functions in the pathway tRNA modification. Its function is as follows. Catalyzes the ATP-dependent 2-thiolation of cytidine in position 32 of tRNA, to form 2-thiocytidine (s(2)C32). The sulfur atoms are provided by the cysteine/cysteine desulfurase (IscS) system. This chain is tRNA-cytidine(32) 2-sulfurtransferase, found in Paraburkholderia phytofirmans (strain DSM 17436 / LMG 22146 / PsJN) (Burkholderia phytofirmans).